We begin with the raw amino-acid sequence, 362 residues long: D-alanine--D-alanine ligase (362 aa).

One can recognise an ATP-grasp domain in the interval 134–345 (KILAQRAGVP…YPDLITRLIR (212 aa)). 170–225 (GQLGTSNLFVKPSNQGSSVGITHVTDDSNYAEALAEAFKYDDKVLVEEGIVGTEVE) serves as a coordination point for ATP. Mg(2+)-binding residues include D298, E312, and N314.

This sequence belongs to the D-alanine--D-alanine ligase family. It depends on Mg(2+) as a cofactor. The cofactor is Mn(2+).

It is found in the cytoplasm. The enzyme catalyses 2 D-alanine + ATP = D-alanyl-D-alanine + ADP + phosphate + H(+). The protein operates within cell wall biogenesis; peptidoglycan biosynthesis. In terms of biological role, cell wall formation. This Lactobacillus delbrueckii subsp. bulgaricus (strain ATCC 11842 / DSM 20081 / BCRC 10696 / JCM 1002 / NBRC 13953 / NCIMB 11778 / NCTC 12712 / WDCM 00102 / Lb 14) protein is D-alanine--D-alanine ligase.